We begin with the raw amino-acid sequence, 449 residues long: 5'-deoxyadenosine deaminase (449 aa).

Zn(2+) is bound by residues His-79 and His-81. Glu-108 and His-200 together coordinate substrate. Zn(2+) is bound at residue His-227. Residues Glu-230 and Asp-316 each contribute to the substrate site. Position 316 (Asp-316) interacts with Zn(2+).

It belongs to the metallo-dependent hydrolases superfamily. MTA/SAH deaminase family. In terms of assembly, homotetramer. It depends on Zn(2+) as a cofactor.

The enzyme catalyses 5'-deoxyadenosine + H2O + H(+) = 5'-deoxyinosine + NH4(+). The catalysed reaction is S-adenosyl-L-homocysteine + H2O + H(+) = S-inosyl-L-homocysteine + NH4(+). It carries out the reaction S-methyl-5'-thioadenosine + H2O + H(+) = S-methyl-5'-thioinosine + NH4(+). It catalyses the reaction adenosine + H2O + H(+) = inosine + NH4(+). It participates in amino-acid biosynthesis; S-adenosyl-L-methionine biosynthesis. Catalyzes the deamination of three SAM-derived enzymatic products, namely 5'-deoxyadenosine, S-adenosyl-L-homocysteine, and 5'-methylthioadenosine, to produce the inosine analogs. Can also deaminate adenosine. The preferred substrate for this enzyme is 5'-deoxyadenosine, but all these substrates are efficiently deaminated. Likely functions in a S-adenosyl-L-methionine (SAM) recycling pathway from S-adenosyl-L-homocysteine (SAH) produced from SAM-dependent methylation reactions. May also be involved in the recycling of 5'-deoxyadenosine, whereupon the 5'-deoxyribose moiety of 5'-deoxyinosine is further metabolized to deoxyhexoses used for the biosynthesis of aromatic amino acids in methanogens. This is 5'-deoxyadenosine deaminase from Methanospirillum hungatei JF-1 (strain ATCC 27890 / DSM 864 / NBRC 100397 / JF-1).